Reading from the N-terminus, the 156-residue chain is Phosphoribosyl-AMP cyclohydrolase (156 aa).

Asp106 lines the Mg(2+) pocket. A Zn(2+)-binding site is contributed by Cys107. Asp108 and Asp110 together coordinate Mg(2+). Residues Cys123 and Cys130 each contribute to the Zn(2+) site.

Belongs to the PRA-CH family. As to quaternary structure, homodimer. Mg(2+) is required as a cofactor. The cofactor is Zn(2+).

The protein localises to the cytoplasm. It carries out the reaction 1-(5-phospho-beta-D-ribosyl)-5'-AMP + H2O = 1-(5-phospho-beta-D-ribosyl)-5-[(5-phospho-beta-D-ribosylamino)methylideneamino]imidazole-4-carboxamide. It functions in the pathway amino-acid biosynthesis; L-histidine biosynthesis; L-histidine from 5-phospho-alpha-D-ribose 1-diphosphate: step 3/9. Functionally, catalyzes the hydrolysis of the adenine ring of phosphoribosyl-AMP. The protein is Phosphoribosyl-AMP cyclohydrolase of Gluconobacter oxydans (strain 621H) (Gluconobacter suboxydans).